We begin with the raw amino-acid sequence, 249 residues long: MIEFKKVEKVWPNGKHVLKDINLKINAGEFVAVIGLSGAGKTTLLKTINKINNISSGEIFIDINENEKYEINKTKGKSLRNLRKHIGLMSQEYNNIEKQTVLKNVLNSRVAQMNFFRAMAGFFTKEEKQNALAALEKLNLLEFSYIRADNLSGGQQQRVALARTINQNPKIIIADEPVSALDPILANRVMEDFKKINSELNITVIINIHHVDLALKYCDRIIGLKDGEIVFDGDPKKLNESKLEEIYGK.

The region spanning 2–246 (IEFKKVEKVW…KLNESKLEEI (245 aa)) is the ABC transporter domain. Residue 35–42 (GLSGAGKT) participates in ATP binding.

Belongs to the ABC transporter superfamily. Phosphonates importer (TC 3.A.1.9.1) family. The complex is composed of two ATP-binding proteins (PhnC), two transmembrane proteins (PhnE) and a solute-binding protein (PhnD).

Its subcellular location is the cell membrane. It carries out the reaction phosphonate(out) + ATP + H2O = phosphonate(in) + ADP + phosphate + H(+). Functionally, part of the ABC transporter complex PhnCDE involved in phosphonates import. Responsible for energy coupling to the transport system. This Mesoplasma florum (strain ATCC 33453 / NBRC 100688 / NCTC 11704 / L1) (Acholeplasma florum) protein is Phosphonates import ATP-binding protein PhnC.